The chain runs to 92 residues: Small ribosomal subunit protein uS19c (92 aa).

The protein belongs to the universal ribosomal protein uS19 family.

Its subcellular location is the plastid. It localises to the chloroplast. Its function is as follows. Protein S19 forms a complex with S13 that binds strongly to the 16S ribosomal RNA. In Staurastrum punctulatum (Green alga), this protein is Small ribosomal subunit protein uS19c.